We begin with the raw amino-acid sequence, 382 residues long: Methylthioribose-1-phosphate isomerase (382 aa).

Asp261 serves as the catalytic Proton donor.

It belongs to the eIF-2B alpha/beta/delta subunits family. MtnA subfamily.

It localises to the cytoplasm. Its subcellular location is the nucleus. The enzyme catalyses 5-(methylsulfanyl)-alpha-D-ribose 1-phosphate = 5-(methylsulfanyl)-D-ribulose 1-phosphate. Its pathway is amino-acid biosynthesis; L-methionine biosynthesis via salvage pathway; L-methionine from S-methyl-5-thio-alpha-D-ribose 1-phosphate: step 1/6. Its function is as follows. Catalyzes the interconversion of methylthioribose-1-phosphate (MTR-1-P) into methylthioribulose-1-phosphate (MTRu-1-P). The chain is Methylthioribose-1-phosphate isomerase from Ricinus communis (Castor bean).